The chain runs to 153 residues: Ribosome maturation factor RimP (153 aa).

It belongs to the RimP family.

It is found in the cytoplasm. In terms of biological role, required for maturation of 30S ribosomal subunits. In Desulforamulus reducens (strain ATCC BAA-1160 / DSM 100696 / MI-1) (Desulfotomaculum reducens), this protein is Ribosome maturation factor RimP.